A 418-amino-acid polypeptide reads, in one-letter code: Probable serine/threonine-protein kinase DDB_G0280461 (418 aa).

The region spanning 14 to 271 (KIEENEFSKG…IVQTLDQLAI (258 aa)) is the Protein kinase domain. ATP-binding positions include 20–28 (FSKGSFAKV) and Lys-41. The active-site Proton acceptor is the Asp-139. Disordered regions lie at residues 327-356 (NNNN…NNNN) and 377-418 (SVNS…CLIN). The segment covering 377–402 (SVNSSFSNSSLGSNGSNSSGTSTSSG) has biased composition (low complexity). A compositionally biased stretch (basic residues) spans 403-418 (GKKRSQKRKSWKCLIN).

This sequence belongs to the protein kinase superfamily. TKL Ser/Thr protein kinase family.

The enzyme catalyses L-seryl-[protein] + ATP = O-phospho-L-seryl-[protein] + ADP + H(+). It catalyses the reaction L-threonyl-[protein] + ATP = O-phospho-L-threonyl-[protein] + ADP + H(+). The polypeptide is Probable serine/threonine-protein kinase DDB_G0280461 (Dictyostelium discoideum (Social amoeba)).